Consider the following 396-residue polypeptide: 1-deoxy-D-xylulose 5-phosphate reductoisomerase (396 aa).

T13, G14, S15, V16, and N127 together coordinate NADPH. K128 serves as a coordination point for 1-deoxy-D-xylulose 5-phosphate. E129 contributes to the NADPH binding site. D153 is a binding site for Mn(2+). 1-deoxy-D-xylulose 5-phosphate is bound by residues S154, E155, S184, and H207. E155 contributes to the Mn(2+) binding site. G213 is a binding site for NADPH. S220, N225, K226, and E229 together coordinate 1-deoxy-D-xylulose 5-phosphate. E229 contributes to the Mn(2+) binding site.

The protein belongs to the DXR family. Mg(2+) is required as a cofactor. The cofactor is Mn(2+).

It carries out the reaction 2-C-methyl-D-erythritol 4-phosphate + NADP(+) = 1-deoxy-D-xylulose 5-phosphate + NADPH + H(+). It functions in the pathway isoprenoid biosynthesis; isopentenyl diphosphate biosynthesis via DXP pathway; isopentenyl diphosphate from 1-deoxy-D-xylulose 5-phosphate: step 1/6. Functionally, catalyzes the NADPH-dependent rearrangement and reduction of 1-deoxy-D-xylulose-5-phosphate (DXP) to 2-C-methyl-D-erythritol 4-phosphate (MEP). The protein is 1-deoxy-D-xylulose 5-phosphate reductoisomerase of Pseudomonas fluorescens (strain SBW25).